The primary structure comprises 444 residues: Phosphoglucosamine mutase (444 aa).

S102 acts as the Phosphoserine intermediate in catalysis. Mg(2+) contacts are provided by S102, D241, D243, and D245. S102 carries the post-translational modification Phosphoserine.

It belongs to the phosphohexose mutase family. It depends on Mg(2+) as a cofactor. Post-translationally, activated by phosphorylation.

It catalyses the reaction alpha-D-glucosamine 1-phosphate = D-glucosamine 6-phosphate. Functionally, catalyzes the conversion of glucosamine-6-phosphate to glucosamine-1-phosphate. The chain is Phosphoglucosamine mutase from Acidovorax sp. (strain JS42).